The chain runs to 143 residues: Large ribosomal subunit protein uL15 (143 aa).

The interval 1 to 59 (MELNGIKPADGAKHYKRRVGRGIGSGIGKTAGRGHKGQKSRAGGYHKVGFEGGQMPMQR) is disordered. Residues 21 to 31 (RGIGSGIGKTA) show a composition bias toward gly residues.

This sequence belongs to the universal ribosomal protein uL15 family. Part of the 50S ribosomal subunit.

In terms of biological role, binds to the 23S rRNA. In Albidiferax ferrireducens (strain ATCC BAA-621 / DSM 15236 / T118) (Rhodoferax ferrireducens), this protein is Large ribosomal subunit protein uL15.